The primary structure comprises 182 residues: Ribosome-recycling factor (182 aa).

This sequence belongs to the RRF family.

The protein resides in the cytoplasm. Its function is as follows. Responsible for the release of ribosomes from messenger RNA at the termination of protein biosynthesis. May increase the efficiency of translation by recycling ribosomes from one round of translation to another. In Gloeothece citriformis (strain PCC 7424) (Cyanothece sp. (strain PCC 7424)), this protein is Ribosome-recycling factor.